The primary structure comprises 367 residues: Forkhead box protein I2-B (367 aa).

A compositionally biased stretch (low complexity) spans 31–40 (QQQNQQLPQR). Residues 31–51 (QQQNQQLPQRPAAPPAPGYGL) are disordered. A DNA-binding region (fork-head) is located at residues 124 to 218 (RPPYSYSSLI…DNGNFRRKRK (95 aa)). Residues 224 to 254 (VGAGFDEESNEDKKPLALKSLGPDSPGGASV) form a disordered region.

Its subcellular location is the nucleus. Its function is as follows. Possible transcriptional activator. This Xenopus laevis (African clawed frog) protein is Forkhead box protein I2-B (foxi2-b).